The following is a 480-amino-acid chain: Aspartyl/glutamyl-tRNA(Asn/Gln) amidotransferase subunit B (480 aa).

The protein belongs to the GatB/GatE family. GatB subfamily. As to quaternary structure, heterotrimer of A, B and C subunits.

The catalysed reaction is L-glutamyl-tRNA(Gln) + L-glutamine + ATP + H2O = L-glutaminyl-tRNA(Gln) + L-glutamate + ADP + phosphate + H(+). The enzyme catalyses L-aspartyl-tRNA(Asn) + L-glutamine + ATP + H2O = L-asparaginyl-tRNA(Asn) + L-glutamate + ADP + phosphate + 2 H(+). Its function is as follows. Allows the formation of correctly charged Asn-tRNA(Asn) or Gln-tRNA(Gln) through the transamidation of misacylated Asp-tRNA(Asn) or Glu-tRNA(Gln) in organisms which lack either or both of asparaginyl-tRNA or glutaminyl-tRNA synthetases. The reaction takes place in the presence of glutamine and ATP through an activated phospho-Asp-tRNA(Asn) or phospho-Glu-tRNA(Gln). The sequence is that of Aspartyl/glutamyl-tRNA(Asn/Gln) amidotransferase subunit B from Streptococcus thermophilus (strain ATCC BAA-250 / LMG 18311).